We begin with the raw amino-acid sequence, 359 residues long: Peroxisome assembly protein 12 (359 aa).

The Peroxisomal matrix portion of the chain corresponds to 1-24 (MSTTIRASQLASSISPKTEEKQPS). The helical transmembrane segment at 25 to 52 (VFDIIAQENLATSIRPALQHLVKYLAFF) threads the bilayer. The Cytoplasmic segment spans residues 53–56 (KPKT). The helical transmembrane segment at 57–81 (FLSVHRNFDEYYIIFDLILQNHYLR) threads the bilayer. The Peroxisomal matrix portion of the chain corresponds to 82–106 (NYGASFTENFYSMKRIASGTGNPPN). The chain crosses the membrane as a helical span at residues 107 to 128 (DGRERIMSLITLVGWPYVENKL). Residues 129-133 (NQLYD) lie on the Cytoplasmic side of the membrane. Residues 134–184 (RLKEVYECRSWSSINGMKAKCQKMFVIIWPYIKTALKAVKSALQLAYILNR) traverse the membrane as a helical segment. At 185–253 (SSIHSPWLYF…ILGLPGIVSR (69 aa)) the chain is on the peroxisomal matrix side. Residues 254–281 (LFAYGLFFVQFLDYMYNTDLAKLTKTGL) traverse the membrane as a helical segment. The Cytoplasmic portion of the chain corresponds to 282 to 359 (DGAIPSPPHK…NVQHLIRLFV (78 aa)). Residues Cys-307, Cys-310, Cys-328, and Cys-331 each coordinate Zn(2+). An RING-type; degenerate zinc finger spans residues 307 to 346 (CPICLKKRVNDTALFVSGYVFCYTCINQYVNTYNKCPVTG).

Belongs to the pex2/pex10/pex12 family. In terms of assembly, component of the PEX2-PEX10-PEX12 retrotranslocation channel.

The protein localises to the peroxisome membrane. Its pathway is protein modification; protein ubiquitination. Its function is as follows. Component of a retrotranslocation channel required for peroxisome organization by mediating export of the PEX5/prx-5 receptor from peroxisomes to the cytosol, thereby promoting PEX5/prx-5 recycling. The retrotranslocation channel is composed of PEX2/prx-2, PEX10/prx-10 and PEX12/prx-12; each subunit contributing transmembrane segments that coassemble into an open channel that specifically allows the passage of PEX5/prx-5 through the peroxisomal membrane. PEX12/prx-12 also regulates PEX5/prx-5 recycling by activating the E3 ubiquitin-protein ligase activity of PEX10/prx-10. When PEX5 recycling is compromised, PEX12/prx-12 stimulates PEX10-mediated polyubiquitination of PEX5/prx-5, leading to its subsequent degradation. The chain is Peroxisome assembly protein 12 (prx-12) from Caenorhabditis elegans.